We begin with the raw amino-acid sequence, 264 residues long: Thymidylate synthase (264 aa).

Arginine 21 is a binding site for dUMP. Histidine 51 contributes to the (6R)-5,10-methylene-5,6,7,8-tetrahydrofolate binding site. DUMP is bound at residue 126–127 (RR). The active-site Nucleophile is cysteine 146. DUMP-binding positions include 166-169 (RSCD), asparagine 177, and 207-209 (HLY). Aspartate 169 contributes to the (6R)-5,10-methylene-5,6,7,8-tetrahydrofolate binding site. Alanine 263 lines the (6R)-5,10-methylene-5,6,7,8-tetrahydrofolate pocket.

Belongs to the thymidylate synthase family. Bacterial-type ThyA subfamily. In terms of assembly, homodimer.

It is found in the cytoplasm. It carries out the reaction dUMP + (6R)-5,10-methylene-5,6,7,8-tetrahydrofolate = 7,8-dihydrofolate + dTMP. Its pathway is pyrimidine metabolism; dTTP biosynthesis. Its function is as follows. Catalyzes the reductive methylation of 2'-deoxyuridine-5'-monophosphate (dUMP) to 2'-deoxythymidine-5'-monophosphate (dTMP) while utilizing 5,10-methylenetetrahydrofolate (mTHF) as the methyl donor and reductant in the reaction, yielding dihydrofolate (DHF) as a by-product. This enzymatic reaction provides an intracellular de novo source of dTMP, an essential precursor for DNA biosynthesis. The sequence is that of Thymidylate synthase from Pectobacterium atrosepticum (strain SCRI 1043 / ATCC BAA-672) (Erwinia carotovora subsp. atroseptica).